Here is a 221-residue protein sequence, read N- to C-terminus: Pyridoxine/pyridoxamine 5'-phosphate oxidase (221 aa).

Substrate-binding positions include 14–17 (RNEY) and lysine 73. Residues 68 to 73 (RTVLLK), 83 to 84 (FT), lysine 90, and glutamine 112 contribute to the FMN site. Residues tyrosine 130, arginine 134, and serine 138 each contribute to the substrate site. FMN is bound by residues 147 to 148 (QS) and tryptophan 193. 199–201 (RLH) contributes to the substrate binding site. Arginine 203 provides a ligand contact to FMN.

This sequence belongs to the pyridoxamine 5'-phosphate oxidase family. As to quaternary structure, homodimer. FMN is required as a cofactor.

It carries out the reaction pyridoxamine 5'-phosphate + O2 + H2O = pyridoxal 5'-phosphate + H2O2 + NH4(+). The catalysed reaction is pyridoxine 5'-phosphate + O2 = pyridoxal 5'-phosphate + H2O2. Its pathway is cofactor metabolism; pyridoxal 5'-phosphate salvage; pyridoxal 5'-phosphate from pyridoxamine 5'-phosphate: step 1/1. It functions in the pathway cofactor metabolism; pyridoxal 5'-phosphate salvage; pyridoxal 5'-phosphate from pyridoxine 5'-phosphate: step 1/1. Functionally, catalyzes the oxidation of either pyridoxine 5'-phosphate (PNP) or pyridoxamine 5'-phosphate (PMP) into pyridoxal 5'-phosphate (PLP). This chain is Pyridoxine/pyridoxamine 5'-phosphate oxidase, found in Salinispora arenicola (strain CNS-205).